The following is a 410-amino-acid chain: MEKFLQEAKSASRVLSLLSGAKKNRVLKEMANALRVNKADLIDANALDMADGKKNSLSLALMDRLLLDEVRIEAMAVAIEEIAALKEPVGRVLDGWVTEAGLKIEKVSIPIGVIGIIYESRPNVTSDTAALCFKSSNVCVLKGGKEAQNSNEAIAKVLQATLEKNSLPKSLISLVPDSSREGVAKLIKMDKYVDLIIPRGGEGLIKYVCDNATVSVVKHDKGQCHTYIDKEAILEDAIKIAINAKTQRPGVCNAMETLLVDSAIAKSALPLIKAEFDKANTKLKGCLKTQEIIDVESVTEEDYDTEYLDNILNMRVVDGVEEAIEHIVRFGSGHSEAIVTQNVTTAEKFLNSIDAAAVYLNASTRFTDGGSFGFGAEVGISTNKLHARGPMGIEGLTTYKYKIYGSGQTR.

It belongs to the gamma-glutamyl phosphate reductase family.

It localises to the cytoplasm. It catalyses the reaction L-glutamate 5-semialdehyde + phosphate + NADP(+) = L-glutamyl 5-phosphate + NADPH + H(+). It participates in amino-acid biosynthesis; L-proline biosynthesis; L-glutamate 5-semialdehyde from L-glutamate: step 2/2. In terms of biological role, catalyzes the NADPH-dependent reduction of L-glutamate 5-phosphate into L-glutamate 5-semialdehyde and phosphate. The product spontaneously undergoes cyclization to form 1-pyrroline-5-carboxylate. This is Gamma-glutamyl phosphate reductase from Sulfurimonas denitrificans (strain ATCC 33889 / DSM 1251) (Thiomicrospira denitrificans (strain ATCC 33889 / DSM 1251)).